A 160-amino-acid polypeptide reads, in one-letter code: Cyclic pyranopterin monophosphate synthase (160 aa).

Substrate contacts are provided by residues 75-77 (MCH) and 115-116 (ME). Residue Asp-130 is part of the active site.

It belongs to the MoaC family. In terms of assembly, homohexamer; trimer of dimers.

It carries out the reaction (8S)-3',8-cyclo-7,8-dihydroguanosine 5'-triphosphate = cyclic pyranopterin phosphate + diphosphate. Its pathway is cofactor biosynthesis; molybdopterin biosynthesis. Catalyzes the conversion of (8S)-3',8-cyclo-7,8-dihydroguanosine 5'-triphosphate to cyclic pyranopterin monophosphate (cPMP). The polypeptide is Cyclic pyranopterin monophosphate synthase (Lysinibacillus sphaericus (strain C3-41)).